A 310-amino-acid polypeptide reads, in one-letter code: Mycothiol acetyltransferase (310 aa).

N-acetyltransferase domains follow at residues 5 to 155 (TTVE…HPAR) and 160 to 309 (PPFR…LPAA). 80–82 (LLV) contributes to the acetyl-CoA binding site. Residues Asp187, Lys226, and Glu238 each contribute to the 1D-myo-inositol 2-(L-cysteinylamino)-2-deoxy-alpha-D-glucopyranoside site. 242 to 244 (IAT) contributes to the acetyl-CoA binding site. Tyr276 contributes to the 1D-myo-inositol 2-(L-cysteinylamino)-2-deoxy-alpha-D-glucopyranoside binding site. Residue 281-286 (NERALR) participates in acetyl-CoA binding.

Belongs to the acetyltransferase family. MshD subfamily. In terms of assembly, monomer.

It catalyses the reaction 1D-myo-inositol 2-(L-cysteinylamino)-2-deoxy-alpha-D-glucopyranoside + acetyl-CoA = mycothiol + CoA + H(+). In terms of biological role, catalyzes the transfer of acetyl from acetyl-CoA to desacetylmycothiol (Cys-GlcN-Ins) to form mycothiol. In Acidimicrobium ferrooxidans (strain DSM 10331 / JCM 15462 / NBRC 103882 / ICP), this protein is Mycothiol acetyltransferase.